Reading from the N-terminus, the 238-residue chain is Uridylate kinase (238 aa).

12–15 (KLSG) is an ATP binding site. Gly54 serves as a coordination point for UMP. Positions 55 and 59 each coordinate ATP. UMP is bound by residues Asp74 and 135–142 (TGNPYFTT). The ATP site is built by Thr162, Tyr168, and Asp171.

This sequence belongs to the UMP kinase family. As to quaternary structure, homohexamer.

It is found in the cytoplasm. The catalysed reaction is UMP + ATP = UDP + ADP. Its pathway is pyrimidine metabolism; CTP biosynthesis via de novo pathway; UDP from UMP (UMPK route): step 1/1. Inhibited by UTP. Functionally, catalyzes the reversible phosphorylation of UMP to UDP. This is Uridylate kinase from Oleidesulfovibrio alaskensis (strain ATCC BAA-1058 / DSM 17464 / G20) (Desulfovibrio alaskensis).